A 241-amino-acid chain; its full sequence is MPASIPRRNIVGKEKKSRILTKPCVIEYEGQIVGYGSKELRVETISCWLARTIIQTKHYSRRFVNNSYLHLGVFSGRDLVGVLQWGYALNPNSGRRVVLETDNRGYMELNRMWLHDDMPRNSESRAISYALKVIRLLYPSVEWVQSFADERCGRAGVVYQASNFDFIGSHESTFYELDGEWYHEITMNAIKRGGQRGVYLRANKERAVVHKFNQYRYIRFLNKRARKRLNTKLFKVQPYPK.

Fe cation contacts are provided by Tyr-59, Asp-149, and Tyr-159.

The protein belongs to the mulikevirus mom protein family. Requires Fe(2+) as cofactor. It depends on Fe(3+) as a cofactor.

It localises to the host cytoplasm. It catalyses the reaction a 2'-deoxyadenosine in DNA + acetyl-CoA + AH2 + NH4(+) + O2 = a N(6)-methylcarbamoyl-2'-deoxyadenosine in DNA + A + CoA + 2 H2O + H(+). Its function is as follows. Iron-binding protein that performs methylcarbamoylation of adenine using acetyl CoA. This chemical modificaltion makes the viral DNA resistant to a variety of host type I and type II restriction enzymes by modifying approximately 15% of DNA adenine residues. The modification called momylation changes adenine for N6-methylcarbamoyl adenine and occurs just before packaging. Target sequences are 5'-(C or G)-A-(Cor G)-N-(C or T)-3'. Also usually modifies adenine residues in the host cellular DNA. This Escherichia phage Mu (Bacteriophage Mu) protein is Methylcarbamoylase mom (mom).